Here is a 60-residue protein sequence, read N- to C-terminus: Ixodegrin-Ip (60 aa).

The signal sequence occupies residues 1–21 (MNAAFIAALFILGALTLDAMA). Positions 49–51 (RGD) match the Cell attachment site motif.

Belongs to the ixodegrin family. In terms of processing, contains 3 disulfide bonds. As to expression, expressed in salivary glands.

The protein resides in the secreted. In terms of biological role, tick salivary platelet aggregation inhibitor that plays an important part in the anti-hemostatic strategy of ticks. Inhibits platelet aggregation induced by ADP, thrombin and thromboxane A2 (TXA2). Blocks platelet adhesion to soluble collagen (most probably through the binding to alpha-2/beta-1 integrin (ITGA2/ITGB1)) and binds to purified glycoprotein IIb/IIIa (ITGA2B/ITGB3) in a dose-dependent manner. In vivo, reduces thrombus weight effectively in a rat arteriovenous shunt model and inhibits thrombosis in a carrageenan-induced mouse tail thrombosis model. This Ixodes pacificus (Western black-legged tick) protein is Ixodegrin-Ip.